The sequence spans 790 residues: Cadherin-6 (790 aa).

The N-terminal stretch at 1-18 is a signal peptide; that stretch reads MRTYRYFLLLFWVGQPYP. Positions 19-53 are excised as a propeptide; the sequence is TLSTPLSKRTSGFPAKKRALELSGNSKNELNRSKR. N-linked (GlcNAc...) asparagine glycosylation is present at asparagine 49. 5 consecutive Cadherin domains span residues 54–159, 160–268, 269–383, 384–486, and 487–608; these read SWMW…EPIF, TKEV…PPRF, PQST…PPVF, SKLA…DNAP, and EFAE…LIHP. Residues 54–615 lie on the Extracellular side of the membrane; that stretch reads SWMWNQFFLL…IHPTGLSTGA (562 aa). N-linked (GlcNAc...) asparagine glycosylation is present at asparagine 255. Positions 259–288 are disordered; sequence TDVNDNPPRFPQSTYQFKTPESSPPGTPIG. Over residues 269–279 the composition is skewed to polar residues; sequence PQSTYQFKTPE. Asparagine 399, asparagine 437, asparagine 455, and asparagine 536 each carry an N-linked (GlcNAc...) asparagine glycan. A helical transmembrane segment spans residues 616 to 636; sequence LVAILLCIVILLVTVVLFAAL. At 637-790 the chain is on the cytoplasmic side; sequence RRQRKKEPLI…YGGVDSDKDS (154 aa). Phosphoserine is present on residues serine 786 and serine 790.

As to expression, highly expressed in brain, cerebellum, and kidney. Lung, pancreas, and gastric mucosa show a weak expression. Also expressed in certain liver and kidney carcinomas.

The protein localises to the cell membrane. Cadherins are calcium-dependent cell adhesion proteins. They preferentially interact with themselves in a homophilic manner in connecting cells; cadherins may thus contribute to the sorting of heterogeneous cell types. The polypeptide is Cadherin-6 (CDH6) (Homo sapiens (Human)).